A 154-amino-acid chain; its full sequence is Troponin C, isoform 1 (154 aa).

EF-hand domains lie at 8-43, 44-79, 84-119, and 120-154; these read EQTA…LGHQ, LDDA…FLVE, AMMA…LDDK, and LTND…GGDD. Ca(2+) contacts are provided by D57, D59, S61, Q63, and E68. 5 residues coordinate Ca(2+): D133, D135, S137, T139, and E144.

The protein belongs to the troponin C family. As to expression, present only in adult muscles.

The sequence is that of Troponin C, isoform 1 (TpnC41C) from Drosophila melanogaster (Fruit fly).